Reading from the N-terminus, the 503-residue chain is ATP-dependent RNA helicase dbp3 (503 aa).

The span at 1 to 13 shows a compositional bias: basic and acidic residues; the sequence is MGKRVSHNEGADR. Residues 1–37 are disordered; that stretch reads MGKRVSHNEGADRRPKKKAKNEKPEKETMESPAADVT. The short motif at 104–112 is the Q motif element; that stretch reads SFASPTPIQ. Residues 116-292 form the Helicase ATP-binding domain; that stretch reads WPLLFAGRDV…ATFMTSAVTV (177 aa). 129 to 136 contacts ATP; that stretch reads AETGSGKT. A DEAD box motif is present at residues 239 to 242; sequence DEAD. Residues 323–472 enclose the Helicase C-terminal domain; it reads RLVQLLSENQ…EVPQELLKFG (150 aa).

It belongs to the DEAD box helicase family. DDX5/DBP2 subfamily.

It localises to the nucleus. The protein localises to the nucleolus. It carries out the reaction ATP + H2O = ADP + phosphate + H(+). ATP-dependent RNA helicase required for 60S ribosomal subunit synthesis. Involved in efficient pre-rRNA processing, predominantly at site A3, which is necessary for the normal formation of 25S and 5.8S rRNAs. This is ATP-dependent RNA helicase dbp3 (dbp3) from Aspergillus clavatus (strain ATCC 1007 / CBS 513.65 / DSM 816 / NCTC 3887 / NRRL 1 / QM 1276 / 107).